The chain runs to 428 residues: Divergent protein kinase domain 1A (428 aa).

The Cytoplasmic portion of the chain corresponds to 1-27 (MARSLCAGAWLRKPHYLQARLSYMRVK). The chain crosses the membrane as a helical span at residues 28–48 (YLFFSWLVVFVGSWIIYVQYS). Residues 49–428 (TYTELCRGKD…WKKISYTNDS (380 aa)) are Lumenal-facing.

The protein belongs to the DIPK family. Among the many cysteines in the lumenal domain, most are probably involved in disulfide bonds. Ubiquitous.

The protein resides in the endoplasmic reticulum membrane. This is Divergent protein kinase domain 1A (Dipk1a) from Mus musculus (Mouse).